The primary structure comprises 635 residues: Extracellular metalloproteinase MEP (635 aa).

The first 19 residues, 1-19, serve as a signal peptide directing secretion; the sequence is MRYSLSLALLGVAAVTVVA. Residues 20–242 constitute a propeptide that is removed on maturation; that stretch reads HPHTPGRHGV…VHGVVDYVSH (223 aa). Histidine 428 is a binding site for Zn(2+). Glutamate 429 is an active-site residue. Histidine 432 is a Zn(2+) binding site. N-linked (GlcNAc...) asparagine glycosylation occurs at asparagine 473.

This sequence belongs to the peptidase M36 family. It depends on Zn(2+) as a cofactor.

The protein localises to the secreted. Secreted metalloproteinase that allows assimilation of proteinaceous substrates. In Pyricularia oryzae (strain 70-15 / ATCC MYA-4617 / FGSC 8958) (Rice blast fungus), this protein is Extracellular metalloproteinase MEP (MEP).